The sequence spans 618 residues: Leucine aminopeptidase 2 (618 aa).

A peptide is bound by residues 139–141 (QCQ) and 271–276 (PYGGME). Zn(2+) is bound at residue His-300. Catalysis depends on Glu-301, which acts as the Proton acceptor. 2 residues coordinate Zn(2+): His-304 and Glu-323. The active-site Proton donor is the Tyr-388.

Belongs to the peptidase M1 family. Requires Zn(2+) as cofactor.

The protein resides in the cytoplasm. The protein localises to the nucleus. The enzyme catalyses an epoxide + H2O = an ethanediol. Its function is as follows. Aminopeptidase that preferentially cleaves di- and tripeptides. Also has low epoxide hydrolase activity (in vitro). Can hydrolyze the epoxide leukotriene LTA(4) but it forms preferentially 5,6-dihydroxy-7,9,11,14-eicosatetraenoic acid rather than the cytokine leukotriene B(4) as the product compared to the homologous mammalian enzyme (in vitro). This Aspergillus niger (strain ATCC MYA-4892 / CBS 513.88 / FGSC A1513) protein is Leucine aminopeptidase 2.